The chain runs to 67 residues: Metallothionein-A (67 aa).

It belongs to the metallothionein superfamily. Type 4 family.

Functionally, metallothioneins have a high content of cysteine residues that bind various heavy metals. The chain is Metallothionein-A from Sphaerechinus granularis (Purple sea urchin).